Reading from the N-terminus, the 68-residue chain is MRFFFLLLTVALFLTSITGDDAERMLGMKEGGYVREDCGSDCAPCGGECCCEPNSCIDGTCHHESSPN.

Positions 1 to 29 are cleaved as a signal peptide; the sequence is MRFFFLLLTVALFLTSITGDDAERMLGMK. The propeptide occupies 30 to 35; the sequence is EGGYVR. 4 disulfides stabilise this stretch: Cys38/Cys49, Cys42/Cys51, Cys45/Cys56, and Cys50/Cys61. Position 44 is a 4-hydroxyproline (Pro44).

Belongs to the conotoxin G2 superfamily. 1 family. Expressed by the venom duct.

The protein resides in the secreted. Its function is as follows. This peptide promotes cell proliferation (EC(50)=17.85 uM) and inhibits apoptosis (EC(50)=2.2 uM). This Conus miles (Soldier cone) protein is Conotoxin phi-MiXXVIIB.